The primary structure comprises 494 residues: Tripartite motif-containing protein 5 (494 aa).

Ala2 carries the post-translational modification N-acetylalanine. Residues 15-59 (CPICLELLTQPLSLDCGHSFCQACLTANHKTSMPDEGERSCPVCR) form an RING-type zinc finger. The residue at position 86 (Ser86) is a Phosphoserine. The B box-type zinc-finger motif lies at 91–133 (QKVDHCARHGEKLLLFCREDRKVICWLCERSQEHRGHHTFLTE). Residues Cys96, His99, Cys118, and His124 each contribute to the Zn(2+) site. The stretch at 132-241 (TEEVAQEYQM…LISDLEHRLQ (110 aa)) forms a coiled coil. The segment at 186–199 (FEQLRHILDWVESN) is required for interaction with GABARAP and for autophagy. The B30.2/SPRY domain maps to 282–494 (LKVMLEVLRE…VPMTLCSPSS (213 aa)).

Belongs to the TRIM/RBCC family. Can form homodimers and homotrimers. In addition to lower-order dimerization, also exhibits a higher-order multimerization and both low- and high-order multimerizations are essential for its restriction activity. Interacts with BTBD1 and BTBD2. Interacts with PSMC4, PSMC5, PSMD7 and HSPA8/HSC70. Interacts (via B30.2/SPRY domain) with HSPA1A/B. Interacts with PSMC2, MAP3K7/TAK1, TAB2 and TAB3. Interacts with SQSTM1. Interacts with TRIM6 and TRIM34. Interacts with ULK1 (phosphorylated form), GABARAP, GABARAPL1, GABARAPL2, MAP1LC3A, MAP1LC3C and BECN1. Degraded in a proteasome-independent fashion in the absence of viral infection but in a proteasome-dependent fashion following exposure to restriction sensitive virus. Post-translationally, autoubiquitinated in a RING finger- and UBE2D2-dependent manner. Monoubiquitinated by TRIM21. Deubiquitinated by Yersinia YopJ. Ubiquitination may not lead to proteasomal degradation.

It is found in the cytoplasm. Its subcellular location is the nucleus. It catalyses the reaction S-ubiquitinyl-[E2 ubiquitin-conjugating enzyme]-L-cysteine + [acceptor protein]-L-lysine = [E2 ubiquitin-conjugating enzyme]-L-cysteine + N(6)-ubiquitinyl-[acceptor protein]-L-lysine.. It functions in the pathway protein modification; protein ubiquitination. Capsid-specific restriction factor that prevents infection from non-host-adapted retroviruses. Blocks viral replication early in the life cycle, after viral entry but before reverse transcription. In addition to acting as a capsid-specific restriction factor, also acts as a pattern recognition receptor that activates innate immune signaling in response to the retroviral capsid lattice. Binding to the viral capsid triggers its E3 ubiquitin ligase activity, and in concert with the heterodimeric ubiquitin conjugating enzyme complex UBE2V1-UBE2N (also known as UBC13-UEV1A complex) generates 'Lys-63'-linked polyubiquitin chains, which in turn are catalysts in the autophosphorylation of the MAP3K7/TAK1 complex (includes TAK1, TAB2, and TAB3). Activation of the MAP3K7/TAK1 complex by autophosphorylation results in the induction and expression of NF-kappa-B and MAPK-responsive inflammatory genes, thereby leading to an innate immune response in the infected cell. Plays a role in regulating autophagy through activation of autophagy regulator BECN1 by causing its dissociation from its inhibitors BCL2 and TAB2. This Hoolock hoolock (Western hoolock gibbon) protein is Tripartite motif-containing protein 5 (TRIM5).